The sequence spans 218 residues: Glutathione S-transferase Mu 6 (218 aa).

In terms of domain architecture, GST N-terminal spans M1–G88. Glutathione is bound by residues Y7 to W8, W46 to K50, N59 to L60, and Q72 to S73. Residues T90–V208 enclose the GST C-terminal domain. Residue Y116 coordinates substrate.

The protein belongs to the GST superfamily. Mu family. In terms of assembly, homodimer. In terms of tissue distribution, expressed in liver, stomach and small intestine. Not expressed in spleen, kidney, colon, heart, muscle, brain or lung.

It localises to the cytoplasm. It catalyses the reaction RX + glutathione = an S-substituted glutathione + a halide anion + H(+). Its function is as follows. Conjugation of reduced glutathione to a wide number of exogenous and endogenous hydrophobic electrophiles. The sequence is that of Glutathione S-transferase Mu 6 (Gstm6) from Mus musculus (Mouse).